Reading from the N-terminus, the 78-residue chain is Small ribosomal subunit protein uS17 (78 aa).

It belongs to the universal ribosomal protein uS17 family. Part of the 30S ribosomal subunit.

In terms of biological role, one of the primary rRNA binding proteins, it binds specifically to the 5'-end of 16S ribosomal RNA. The chain is Small ribosomal subunit protein uS17 from Wolbachia pipientis wMel.